A 219-amino-acid chain; its full sequence is Protein DCL homolog, chloroplastic (219 aa).

The N-terminal 48 residues, 1 to 48, are a transit peptide targeting the chloroplast; sequence MSLASIPSSSPVASPYFRCRTYIFSFSSSPLCLYFPRGDSTSLRPRVR. Residues 70–96 form a disordered region; it reads LRRPRIASEESSEEEEEEEEENSEGDE. The span at 79 to 96 shows a compositional bias: acidic residues; sequence ESSEEEEEEEEENSEGDE.

Expressed in leaves, stems, flowers and siliques.

The protein localises to the plastid. It is found in the chloroplast. Required for normal plastid function and plant development. Required for correct plastid ribosome assembly. Required for processing and maturation of 4.5S rRNA. The sequence is that of Protein DCL homolog, chloroplastic from Arabidopsis thaliana (Mouse-ear cress).